The chain runs to 338 residues: tRNA N6-adenosine threonylcarbamoyltransferase (338 aa).

The Fe cation site is built by histidine 111 and histidine 115. Residues 134–138 (LVSGG), aspartate 167, glycine 180, and asparagine 272 each bind substrate. Aspartate 300 is a binding site for Fe cation.

This sequence belongs to the KAE1 / TsaD family. Fe(2+) is required as a cofactor.

It localises to the cytoplasm. The catalysed reaction is L-threonylcarbamoyladenylate + adenosine(37) in tRNA = N(6)-L-threonylcarbamoyladenosine(37) in tRNA + AMP + H(+). Required for the formation of a threonylcarbamoyl group on adenosine at position 37 (t(6)A37) in tRNAs that read codons beginning with adenine. Is involved in the transfer of the threonylcarbamoyl moiety of threonylcarbamoyl-AMP (TC-AMP) to the N6 group of A37, together with TsaE and TsaB. TsaD likely plays a direct catalytic role in this reaction. This chain is tRNA N6-adenosine threonylcarbamoyltransferase, found in Shewanella sp. (strain ANA-3).